A 449-amino-acid chain; its full sequence is Glucose-6-phosphate isomerase (449 aa).

The Proton donor role is filled by glutamate 291. Active-site residues include histidine 312 and lysine 426.

Belongs to the GPI family.

It is found in the cytoplasm. The catalysed reaction is alpha-D-glucose 6-phosphate = beta-D-fructose 6-phosphate. The protein operates within carbohydrate biosynthesis; gluconeogenesis. Its pathway is carbohydrate degradation; glycolysis; D-glyceraldehyde 3-phosphate and glycerone phosphate from D-glucose: step 2/4. Functionally, catalyzes the reversible isomerization of glucose-6-phosphate to fructose-6-phosphate. In Streptococcus pyogenes serotype M4 (strain MGAS10750), this protein is Glucose-6-phosphate isomerase.